The following is a 956-amino-acid chain: Angiomotin-like protein 1 (956 aa).

Residues 197–246 (QSQFFRGQQQQQQQQGAVGHGYYMAGGTSQKSRTEGRPTVNRANSGQAHK) form a disordered region. Phosphoserine occurs at positions 241 and 269. A coiled-coil region spans residues 259–279 (RSLSERIMQLSLERNGAKQHL). Disordered stretches follow at residues 274–322 (GAKQ…QMMS), 382–405 (PSTM…LHSV), and 411–430 (LPMA…SQQL). Gly residues predominate over residues 282–294 (SGNGKGFKVGGGP). Position 295 is a phosphoserine (S295). Polar residues predominate over residues 382–398 (PSTMQQHSPMSSQTSSA). 2 coiled-coil regions span residues 438–639 (VERA…WLER) and 665–694 (ALLE…YLEE). S720 is subject to Phosphoserine. Positions 729 to 762 (SLEAHIWQEEEEVVQANRRCQDMEYTIKNLHAKI) form a coiled coil. The segment at 773 to 823 (QQRSRKDAGKTDSSSLRPARSVPSIAAATGTHSRQTSLTSSQLAEEKKEEK) is disordered. A phosphoserine mark is found at S793, S805, and S828. The span at 802 to 815 (GTHSRQTSLTSSQL) shows a compositional bias: polar residues. 2 disordered regions span residues 841–880 (ASAP…TQTD) and 894–944 (PSRG…LHKP). Low complexity predominate over residues 852–866 (SALSSIASTTAASSA). Phosphoserine is present on S900. Position 902 is a phosphothreonine (T902). The residue at position 906 (S906) is a Phosphoserine. A PDZ-binding motif is present at residues 953 to 956 (EVLI).

Belongs to the angiomotin family. Polyubiquitinated by NEDD4, leading to proteasomal degradation.

The protein resides in the cell junction. It localises to the tight junction. Inhibits the Wnt/beta-catenin signaling pathway, probably by recruiting CTNNB1 to recycling endosomes and hence preventing its translocation to the nucleus. The sequence is that of Angiomotin-like protein 1 (AMOTL1) from Homo sapiens (Human).